The primary structure comprises 414 residues: Secernin-1 (414 aa).

The protein belongs to the peptidase C69 family. Secernin subfamily.

The protein localises to the cytoplasm. Its function is as follows. Regulates exocytosis in mast cells. Increases both the extent of secretion and the sensitivity of mast cells to stimulation with calcium. The protein is Secernin-1 (Scrn1) of Rattus norvegicus (Rat).